The primary structure comprises 109 residues: Major allergen I polypeptide chain 2 (109 aa).

Residues Met1–Gly17 form the signal peptide. Asn50 is a glycosylation site (N-linked (GlcNAc...) asparagine).

It belongs to the secretoglobin family. Heterotetramer composed of two non-covalently linked disulfide-linked heterodimer of chains 1 and 2. As to expression, the long form is preferentially expressed in the salivary gland, while the short form is preferentially expressed in the skin.

It localises to the secreted. The sequence is that of Major allergen I polypeptide chain 2 (CH2) from Felis catus (Cat).